The primary structure comprises 148 residues: UPF0178 protein SH2212 (148 aa).

It belongs to the UPF0178 family.

This chain is UPF0178 protein SH2212, found in Staphylococcus haemolyticus (strain JCSC1435).